Here is a 350-residue protein sequence, read N- to C-terminus: Probable V-type proton ATPase subunit d 2 (350 aa).

The protein belongs to the V-ATPase V0D/AC39 subunit family. As to quaternary structure, V-ATPase is a heteromultimeric enzyme made up of two complexes: the ATP-hydrolytic V1 complex and the proton translocation V0 complex. The V1 complex consists of three catalytic AB heterodimers that form a heterohexamer, three peripheral stalks each consisting of EG heterodimers, one central rotor including subunits D and F, and the regulatory subunits C and H. The proton translocation complex V0 consists of the proton transport subunit a, a ring of proteolipid subunits c9c'', rotary subunit d, subunits e and f, and the accessory subunits VhaAC45 and ATP6AP2.

Its function is as follows. Subunit of the V0 complex of vacuolar(H+)-ATPase (V-ATPase), a multisubunit enzyme composed of a peripheral complex (V1) that hydrolyzes ATP and a membrane integral complex (V0) that translocates protons. V-ATPase is responsible for acidifying and maintaining the pH of intracellular compartments and in some cell types, is targeted to the plasma membrane, where it is responsible for acidifying the extracellular environment. May play a role in coupling of proton transport and ATP hydrolysis. This is Probable V-type proton ATPase subunit d 2 (VhaAC39-2) from Drosophila melanogaster (Fruit fly).